Here is a 430-residue protein sequence, read N- to C-terminus: Proteasome-activating nucleotidase (430 aa).

Residues 9–89 are a coiled coil; the sequence is TELKKEKKAF…LRRELDRMRV (81 aa). ATP-binding positions include 214-219 and His-353; that span reads GTGKTL. The segment at 428-430 is docks into pockets in the proteasome alpha-ring to cause gate opening; that stretch reads LYR.

The protein belongs to the AAA ATPase family. As to quaternary structure, homohexamer. The hexameric complex has a two-ring architecture resembling a top hat that caps the 20S proteasome core at one or both ends. Alone, can form a complex composed of two stacked hexameric rings in vitro. Upon ATP-binding, the C-terminus of PAN interacts with the alpha-rings of the proteasome core by binding to the intersubunit pockets.

It localises to the cytoplasm. Its activity is regulated as follows. ATPase activity is inhibited by EDTA, N-ethylmaleimide (NEM) and p-chloromercuriphenyl-sulfonic acid (PCMS) in vitro. In terms of biological role, ATPase which is responsible for recognizing, binding, unfolding and translocation of substrate proteins into the archaeal 20S proteasome core particle. Is essential for opening the gate of the 20S proteasome via an interaction with its C-terminus, thereby allowing substrate entry and access to the site of proteolysis. Thus, the C-termini of the proteasomal ATPase function like a 'key in a lock' to induce gate opening and therefore regulate proteolysis. Unfolding activity requires energy from ATP hydrolysis, whereas ATP binding alone promotes ATPase-20S proteasome association which triggers gate opening, and supports translocation of unfolded substrates. In addition to ATP, is able to cleave other nucleotide triphosphates such as CTP, GTP and UTP, but hydrolysis of these other nucleotides is less effective in promoting proteolysis than ATP. Moreover, PAN by itself can function as a chaperone in vitro. The chain is Proteasome-activating nucleotidase from Methanocaldococcus jannaschii (strain ATCC 43067 / DSM 2661 / JAL-1 / JCM 10045 / NBRC 100440) (Methanococcus jannaschii).